The following is a 926-amino-acid chain: LPS-assembly protein LptD (926 aa).

An N-terminal signal peptide occupies residues 1-22; it reads MALKSPAFRKKFPLLVTGSLLA. Positions 58–99 are disordered; sequence VDLPPRPVHDTTSVSSNGTVTSQSTSSGEQVAGTQLVTEAKG. Positions 68 to 85 are enriched in low complexity; sequence TTSVSSNGTVTSQSTSSG.

Belongs to the LptD family. In terms of assembly, component of the lipopolysaccharide transport and assembly complex. Interacts with LptE and LptA.

It is found in the cell outer membrane. Together with LptE, is involved in the assembly of lipopolysaccharide (LPS) at the surface of the outer membrane. The protein is LPS-assembly protein LptD of Pseudomonas savastanoi pv. phaseolicola (strain 1448A / Race 6) (Pseudomonas syringae pv. phaseolicola (strain 1448A / Race 6)).